Reading from the N-terminus, the 200-residue chain is MEQNHGLLIVLSGPSGAGKGTLCQELLRQLPQVKYSVSATTRQPRPGEMDGLHYYFRSREEFQTMIEQDQLLEWAEFCGNYYGTPQFAVEQAIQAGNDVILEIEIQGALQVKQRFPQGVFIFVVPPSMDELSQRIHKRGTESEEVIQKRLQTAARELEYVSEYDYVVVNDEIPLAVDKLKSILLAEKCRVKRKPYVFQGV.

A Guanylate kinase-like domain is found at 6–184 (GLLIVLSGPS…AVDKLKSILL (179 aa)). Residue 13–20 (GPSGAGKG) participates in ATP binding.

This sequence belongs to the guanylate kinase family.

Its subcellular location is the cytoplasm. The enzyme catalyses GMP + ATP = GDP + ADP. Functionally, essential for recycling GMP and indirectly, cGMP. The chain is Guanylate kinase from Desulfitobacterium hafniense (strain Y51).